Consider the following 332-residue polypeptide: Probable allantoicase (332 aa).

Belongs to the allantoicase family.

The enzyme catalyses allantoate + H2O = (S)-ureidoglycolate + urea. It participates in nitrogen metabolism; (S)-allantoin degradation; (S)-ureidoglycolate from allantoate (aminidohydrolase route): step 1/1. This is Probable allantoicase from Pseudomonas aeruginosa (strain LESB58).